The following is a 553-amino-acid chain: Putative transport protein YidE (553 aa).

The next 5 membrane-spanning stretches (helical) occupy residues 4–24, 28–48, 65–85, 95–115, and 158–178; these read IALTVSVLALVAVVGLWIGNI, GVGFGIGGVLFGGIIVGHFVD, FGLILFVYTIGIQVGPGFFAS, LFAVLIVIMGGLVTAILHKIF, and MSYAMAYPFGICGILLTMWLM. RCK C-terminal domains are found at residues 192–276 and 279–361; these read KHES…VIGK and DTSL…VVGN. The next 6 helical transmembrane spans lie at 371 to 391, 393 to 413, 437 to 457, 464 to 484, 493 to 513, and 533 to 553; these read MLPVFIGIGLGVLLGSIPLFV, GFPVALKLGLAGGPLIMALIL, LGIVLFLAVVGLKSGGDFVDT, LSWIGYGIFITAIPLITVGLL, YLTLCGMLAGSMTDPPALAFA, and LVMFLRIITPQLLAVIFWGMG.

Belongs to the AAE transporter (TC 2.A.81) family. YidE subfamily.

Its subcellular location is the cell membrane. This Salmonella heidelberg (strain SL476) protein is Putative transport protein YidE.